A 344-amino-acid polypeptide reads, in one-letter code: uncharacterized protein (344 aa).

The interval 190–232 (SGKRVRSAKKSGADAARASEGATCDRASSESVSPTARPPAQAS) is disordered.

This is an uncharacterized protein from Treponema pallidum (strain Nichols).